The primary structure comprises 1853 residues: MADHHDSRRRYSHTRHHSASKSPVALMDRIVERSPPLHPQPSSRMSLSALVNDSPSPPRRITPPPAAYAERHPHPSAYYPSSTTDPGYMGAMDDRRYSYPPPRTSYVQPSTHPSPTASDYRYRSPVLPQHPPTHHSPSSYSASLYGQPKEDPAIAYARMREEMRTAEEARREAEALEYRRKRDMEFAARRPGSELMDDPRRIPHSSFPRSQMYGPSADQSRVMPSRNGKDYISEPPSPSELYPTDEDTERLPIDRYRRDIDVPPLPRQLPPPPSEIGRMADRARSPSAPIAPPLLKVVRKRTKVIRPNDFLVGNEDVWEDGLIRYQSKREDEVRAIAQWAASCQVRNGVGEPSLPQTQDESIKVRKINGDIATPTNKKKRKSRKLNLDDELLGLASSPPGSPNAAAEAEKSESKHHIYGMNGPIDPANPPSPSTIVYPSGLTRAEVIAKCEAGDVEGLTEDDVKAVQDEMWMREKAAQAAENGGVLPTNKDGTVRRKPGPAKGWRKIRGIDKKKETTPGKAQSTTAGSVAGSVADEEAEADIAALLDDSIAKKGKKVKRRKLEEPGAESPRFADAEDEYNEHRPSDSVLLDEIEDEHSRAGSVGESNALDTLPAASAPPKKKNSKTKEPGVGKGRWTRPTKPEKELVKKAEALASRTSKASLAGPSDDTFGVGPGPAEEVQEEIKHEYAPNTHDPRGVSENEAKIRHELVEDLQKQAWSNIVRDVPRIYRVFQGYDQSMKQIAQRRAQACVRNAFGQRNQKTMQRQSGKVNKEGAAKAKRIVKELAAFWRKNEKDEVIARKKAEREALERAKAEEEARETKRQSRKLNFLLTQTELYSHFIGKKIKTKEAEAAEGMDVEEEEKRGMEEIAIGEDGEPLPDLDYDEDDEENLRKHAARGAQAAIQAARDKARAFDDSIVGRGAPLPGDDTMDGDELNFQNPSLGENSVTITQPKMLMAQLKEYQLKGLTWLGNLYEQGINGILADEMGLGKTIQSISLLAYLAEHHNLWGPFLVIAPASTLHNWQQELARFVPRLKALPYWGSPKDRETLRKIWSRKNQTFSEDSPFHILITSYQLAVQDEKYLQGMKWQYMILDEAQAIKSSSSARWKSLLSLHCRNRLLLTGTPIQNSMHELWALLHFIMPQLFDSHEEFAEWFSKDIESSSGGVTGNLKPEQLKRLHMILKPFMLRRVKKHVQKELGDKIEIDLLVDLSQRQREIYKALRQRVSITDLLATAENNTDNGNPKNMRSLVNLVMQFRKVCNHPDLFERADVVSPFVFGEFSQSGNLAREGDGMYLPDSARNAIEVQIPRILWTDGGKLDIPGEQSLAGSDTKILQNLLNIWTPEWINERTKCADAEFGFVKLVGSSPGETSRSAKSPVLVQLLEGAEKERRWTEEGRFVDDSEFAASVKKGFRVPSVIPVLTQPGQVSLREISRRVWDESYLSRDDARCIGDYAIAPIVKPIASNRSFLNAQDRILNQPLAHSTLYGLAPSELHDPLAAEQFSRIAPSVPLTGLIPSSASSQTPVSPLHIPPTKRLIVDSAKLARLDSLLRELKAGGHRVLLYFQMTKMMDLIEEYLIFRQYKYLRLDGSSPIAERRDMVTSWQTNPDIFVFCLSTRAGGLGINLTAADTVIFYDHDWNPSSDAQAMDRAHRVGQTKQVTVYRLVARGTIEERILQMARGKKDIQDVVVGTKSVSDVAKPSEIVSLFMDDEELAESVAKRKQAEAHGYIAPTIIPNGRRSQFGDGLVLDDGEGDDGFFNAAAAARANAEEEEGLGAEEESKGKGKAKAAAAVTFPVPGEKRSHKKGMGKKAQAAAAAAALERVIAGNEEPLAASKPPAKKKVKIALGPDGLPL.

Disordered regions lie at residues 1–148 (MADH…YGQP), 189–250 (RRPG…DTER), 391–430 (LLGL…ANPP), 478–534 (QAAE…GSVA), and 546–676 (LDDS…GPGP). A compositionally biased stretch (basic residues) spans 7–19 (SRRRYSHTRHHSA). The span at 40 to 53 (QPSSRMSLSALVND) shows a compositional bias: polar residues. A compositionally biased stretch (pro residues) spans 55-66 (PSPPRRITPPPA). Over residues 105–117 (SYVQPSTHPSPTA) the composition is skewed to polar residues. Residues 189–201 (RRPGSELMDDPRR) are compositionally biased toward basic and acidic residues. Positions 392–406 (LGLASSPPGSPNAAA) are enriched in low complexity. The span at 495-507 (RRKPGPAKGWRKI) shows a compositional bias: basic residues. Composition is skewed to basic and acidic residues over residues 508–517 (RGIDKKKETT) and 640–651 (TKPEKELVKKAE). The DBINO domain maps to 717-847 (AWSNIVRDVP…SHFIGKKIKT (131 aa)). Positions 790–833 (RKNEKDEVIARKKAEREALERAKAEEEARETKRQSRKLNFLLTQ) form a coiled coil. The Helicase ATP-binding domain occupies 971-1143 (GNLYEQGING…WALLHFIMPQ (173 aa)). 984-991 (DEMGLGKT) contacts ATP. The short motif at 1094–1097 (DEAQ) is the DEAQ box element. The Helicase C-terminal domain occupies 1545–1695 (RLDSLLRELK…DVVVGTKSVS (151 aa)). 2 disordered regions span residues 1768–1788 (AEEE…KAKA) and 1828–1853 (EEPL…GLPL).

This sequence belongs to the SNF2/RAD54 helicase family. As to quaternary structure, component of the INO80 chromatin-remodeling complex.

It is found in the nucleus. It catalyses the reaction ATP + H2O = ADP + phosphate + H(+). In terms of biological role, ATPase component of the INO80 complex which remodels chromatin by shifting nucleosomes and is involved in DNA repair. The polypeptide is Chromatin-remodeling ATPase INO80 (INO80) (Cryptococcus neoformans var. neoformans serotype D (strain JEC21 / ATCC MYA-565) (Filobasidiella neoformans)).